A 113-amino-acid chain; its full sequence is UPF0122 protein LAF_1235 (113 aa).

Belongs to the UPF0122 family.

Its function is as follows. Might take part in the signal recognition particle (SRP) pathway. This is inferred from the conservation of its genetic proximity to ftsY/ffh. May be a regulatory protein. In Limosilactobacillus fermentum (strain NBRC 3956 / LMG 18251) (Lactobacillus fermentum), this protein is UPF0122 protein LAF_1235.